The chain runs to 466 residues: Light-independent protochlorophyllide reductase subunit N (466 aa).

[4Fe-4S] cluster is bound by residues Cys24, Cys49, and Cys109.

It belongs to the BchN/ChlN family. In terms of assembly, protochlorophyllide reductase is composed of three subunits; ChlL, ChlN and ChlB. Forms a heterotetramer of two ChlB and two ChlN subunits. [4Fe-4S] cluster serves as cofactor.

The enzyme catalyses chlorophyllide a + oxidized 2[4Fe-4S]-[ferredoxin] + 2 ADP + 2 phosphate = protochlorophyllide a + reduced 2[4Fe-4S]-[ferredoxin] + 2 ATP + 2 H2O. Its pathway is porphyrin-containing compound metabolism; chlorophyll biosynthesis (light-independent). Functionally, component of the dark-operative protochlorophyllide reductase (DPOR) that uses Mg-ATP and reduced ferredoxin to reduce ring D of protochlorophyllide (Pchlide) to form chlorophyllide a (Chlide). This reaction is light-independent. The NB-protein (ChlN-ChlB) is the catalytic component of the complex. The protein is Light-independent protochlorophyllide reductase subunit N of Synechococcus sp. (strain JA-3-3Ab) (Cyanobacteria bacterium Yellowstone A-Prime).